A 122-amino-acid polypeptide reads, in one-letter code: Large ribosomal subunit protein uL14 (122 aa).

The protein belongs to the universal ribosomal protein uL14 family. In terms of assembly, part of the 50S ribosomal subunit. Forms a cluster with proteins L3 and L19. In the 70S ribosome, L14 and L19 interact and together make contacts with the 16S rRNA in bridges B5 and B8.

Its function is as follows. Binds to 23S rRNA. Forms part of two intersubunit bridges in the 70S ribosome. This Streptococcus thermophilus (strain CNRZ 1066) protein is Large ribosomal subunit protein uL14.